Here is an 85-residue protein sequence, read N- to C-terminus: U4-theraphotoxin-Hhn1w (85 aa).

A signal peptide spans 1–22 (MKVTLIAILTCAAVLALHTTAA). Positions 23–48 (EELEAESQLMEVGMPDTELAAVDEER) are excised as a propeptide. 3 disulfide bridges follow: cysteine 52/cysteine 66, cysteine 56/cysteine 77, and cysteine 71/cysteine 82.

It belongs to the neurotoxin 12 (Hwtx-2) family. 02 (Hwtx-2) subfamily. In terms of tissue distribution, expressed by the venom gland.

Its subcellular location is the secreted. Postsynaptic neurotoxin. The sequence is that of U4-theraphotoxin-Hhn1w from Cyriopagopus hainanus (Chinese bird spider).